A 427-amino-acid polypeptide reads, in one-letter code: Flotillin-1 (427 aa).

A phosphoserine mark is found at Ser-19, Ser-163, and Ser-385. Residue Thr-387 is modified to Phosphothreonine.

This sequence belongs to the band 7/mec-2 family. Flotillin subfamily. As to quaternary structure, heterooligomeric complex of flotillin-1 and flotillin-2 and caveolin-1 and caveolin-2. Interacts with ECPAS.

The protein localises to the cell membrane. It is found in the endosome. The protein resides in the membrane. Its subcellular location is the caveola. It localises to the melanosome. The protein localises to the membrane raft. In terms of biological role, may act as a scaffolding protein within caveolar membranes, functionally participating in formation of caveolae or caveolae-like vesicles. The polypeptide is Flotillin-1 (FLOT1) (Homo sapiens (Human)).